The chain runs to 413 residues: Methylaspartate ammonia-lyase (413 aa).

Residue Q172 coordinates (2S,3S)-3-methyl-L-aspartate. Residues D238, E273, and D307 each coordinate Mg(2+). A (2S,3S)-3-methyl-L-aspartate-binding site is contributed by Q329. K331 functions as the Proton acceptor in the catalytic mechanism. (2S,3S)-3-methyl-L-aspartate contacts are provided by residues T360–C361 and C361.

The protein belongs to the methylaspartate ammonia-lyase family. As to quaternary structure, homodimer. The cofactor is Mg(2+).

It catalyses the reaction (2S,3S)-3-methyl-L-aspartate = mesaconate + NH4(+). The protein operates within amino-acid degradation; L-glutamate degradation via mesaconate pathway; acetate and pyruvate from L-glutamate: step 2/4. With respect to regulation, inhibited by calcium ions. In terms of biological role, involved in the methylaspartate cycle. Catalyzes the formation of the alpha,beta-unsaturated bond by the reversible anti elimination of ammonia from L-threo-beta-methylaspartate (L-threo-(2S,3S)-3-methylaspartate) to give mesaconate. It can also use L-erythro-beta-methylaspartate (L-erythro-(2S,3R)-3-methylaspartate), L-aspartate, fumarate and ethylfumarate as substrates. This chain is Methylaspartate ammonia-lyase, found in Clostridium tetanomorphum.